The sequence spans 378 residues: Chaperone protein DnaJ 1 (378 aa).

A J domain is found at 4–68 (DYYGILGVDR…DKRRIVDMGG (65 aa)). Residues 129–211 (GVKKDLTLDT…CAGDGRVRAR (83 aa)) form a CR-type zinc finger. Positions 142, 145, 159, 162, 185, 188, 199, and 202 each coordinate Zn(2+). CXXCXGXG motif repeat units lie at residues 142-149 (CSKCHGSG), 159-166 (CGTCHGSG), 185-192 (CHTCNGTG), and 199-206 (CDECAGDG).

Belongs to the DnaJ family. Homodimer. Requires Zn(2+) as cofactor.

Its subcellular location is the cytoplasm. Its function is as follows. Participates actively in the response to hyperosmotic and heat shock by preventing the aggregation of stress-denatured proteins and by disaggregating proteins, also in an autonomous, DnaK-independent fashion. Unfolded proteins bind initially to DnaJ; upon interaction with the DnaJ-bound protein, DnaK hydrolyzes its bound ATP, resulting in the formation of a stable complex. GrpE releases ADP from DnaK; ATP binding to DnaK triggers the release of the substrate protein, thus completing the reaction cycle. Several rounds of ATP-dependent interactions between DnaJ, DnaK and GrpE are required for fully efficient folding. Also involved, together with DnaK and GrpE, in the DNA replication of plasmids through activation of initiation proteins. This chain is Chaperone protein DnaJ 1, found in Corynebacterium efficiens (strain DSM 44549 / YS-314 / AJ 12310 / JCM 11189 / NBRC 100395).